We begin with the raw amino-acid sequence, 166 residues long: NAD(P)H-quinone oxidoreductase subunit I, chloroplastic (166 aa).

4Fe-4S ferredoxin-type domains are found at residues 55 to 84 (GRIHFEFDKCIACEVCVRVCPIDLPVVDWK) and 95 to 124 (LNYSIDFGICIFCGNCVEYCPTNCLSMTEE). [4Fe-4S] cluster is bound by residues C64, C67, C70, C74, C104, C107, C110, and C114.

The protein belongs to the complex I 23 kDa subunit family. NDH is composed of at least 16 different subunits, 5 of which are encoded in the nucleus. [4Fe-4S] cluster is required as a cofactor.

The protein resides in the plastid. The protein localises to the chloroplast thylakoid membrane. It carries out the reaction a plastoquinone + NADH + (n+1) H(+)(in) = a plastoquinol + NAD(+) + n H(+)(out). The catalysed reaction is a plastoquinone + NADPH + (n+1) H(+)(in) = a plastoquinol + NADP(+) + n H(+)(out). Functionally, NDH shuttles electrons from NAD(P)H:plastoquinone, via FMN and iron-sulfur (Fe-S) centers, to quinones in the photosynthetic chain and possibly in a chloroplast respiratory chain. The immediate electron acceptor for the enzyme in this species is believed to be plastoquinone. Couples the redox reaction to proton translocation, and thus conserves the redox energy in a proton gradient. This chain is NAD(P)H-quinone oxidoreductase subunit I, chloroplastic, found in Laphamia lindheimeri (Lindheimer's rockdaisy).